Consider the following 365-residue polypeptide: Putative chalcone synthase (365 aa).

Cysteine 144 is a catalytic residue.

It belongs to the thiolase-like superfamily. Chalcone/stilbene synthases family.

The enzyme catalyses (E)-4-coumaroyl-CoA + 3 malonyl-CoA + 3 H(+) = 2',4,4',6'-tetrahydroxychalcone + 3 CO2 + 4 CoA. In Bacillus subtilis (strain 168), this protein is Putative chalcone synthase (bcsA).